The primary structure comprises 455 residues: UDP-N-acetylmuramoylalanine--D-glutamate ligase (455 aa).

118–124 contributes to the ATP binding site; that stretch reads GTNGKST.

Belongs to the MurCDEF family.

The protein localises to the cytoplasm. The enzyme catalyses UDP-N-acetyl-alpha-D-muramoyl-L-alanine + D-glutamate + ATP = UDP-N-acetyl-alpha-D-muramoyl-L-alanyl-D-glutamate + ADP + phosphate + H(+). The protein operates within cell wall biogenesis; peptidoglycan biosynthesis. Cell wall formation. Catalyzes the addition of glutamate to the nucleotide precursor UDP-N-acetylmuramoyl-L-alanine (UMA). The chain is UDP-N-acetylmuramoylalanine--D-glutamate ligase from Myxococcus xanthus (strain DK1622).